Reading from the N-terminus, the 223-residue chain is Flagellar L-ring protein (223 aa).

The N-terminal stretch at methionine 1–alanine 18 is a signal peptide. Cysteine 19 is lipidated: N-palmitoyl cysteine. Cysteine 19 carries S-diacylglycerol cysteine lipidation.

This sequence belongs to the FlgH family. As to quaternary structure, the basal body constitutes a major portion of the flagellar organelle and consists of four rings (L,P,S, and M) mounted on a central rod.

The protein resides in the cell outer membrane. Its subcellular location is the bacterial flagellum basal body. Functionally, assembles around the rod to form the L-ring and probably protects the motor/basal body from shearing forces during rotation. This is Flagellar L-ring protein from Herminiimonas arsenicoxydans.